Consider the following 137-residue polypeptide: Glutamate mutase sigma subunit (137 aa).

Residues 3–137 (KKTIVLGVIG…ADLKEDLNIK (135 aa)) form the B12-binding domain. Adenosylcob(III)alamin-binding positions include 13–17 (SDCHA), His-16, 61–63 (SSL), and 93–97 (NIVVG).

It belongs to the methylaspartate mutase GlmS subunit family. As to quaternary structure, heterotetramer composed of 2 epsilon subunits (GlmE) and 2 sigma subunits (GlmS). GlmE exists as a homodimer and GlmS as a monomer. Requires adenosylcob(III)alamin as cofactor.

The catalysed reaction is (2S,3S)-3-methyl-L-aspartate = L-glutamate. It participates in amino-acid degradation; L-glutamate degradation via mesaconate pathway; acetate and pyruvate from L-glutamate: step 1/4. Its function is as follows. Catalyzes the carbon skeleton rearrangement of L-glutamate to L-threo-3-methylaspartate ((2S,3S)-3-methylaspartate). This is Glutamate mutase sigma subunit from Clostridium tetani (strain Massachusetts / E88).